The sequence spans 366 residues: D-alanine--D-alanine ligase (366 aa).

Residues 144 to 347 form the ATP-grasp domain; sequence KRLLKDAGLK…YRELIENLIE (204 aa). 174 to 229 provides a ligand contact to ATP; that stretch reads KEELGLPMFIKPANQGSSVGVHKVENEEQFYSAIKDAFQFDHKLLVEEAIVGREIE. Residues aspartate 301, glutamate 314, and asparagine 316 each contribute to the Mg(2+) site.

The protein belongs to the D-alanine--D-alanine ligase family. Mg(2+) is required as a cofactor. Requires Mn(2+) as cofactor.

Its subcellular location is the cytoplasm. It carries out the reaction 2 D-alanine + ATP = D-alanyl-D-alanine + ADP + phosphate + H(+). It functions in the pathway cell wall biogenesis; peptidoglycan biosynthesis. Cell wall formation. In Oceanobacillus iheyensis (strain DSM 14371 / CIP 107618 / JCM 11309 / KCTC 3954 / HTE831), this protein is D-alanine--D-alanine ligase.